The sequence spans 498 residues: ATP synthase subunit beta, chloroplastic (498 aa).

Residue 172-179 coordinates ATP; the sequence is GGAGVGKT.

It belongs to the ATPase alpha/beta chains family. As to quaternary structure, F-type ATPases have 2 components, CF(1) - the catalytic core - and CF(0) - the membrane proton channel. CF(1) has five subunits: alpha(3), beta(3), gamma(1), delta(1), epsilon(1). CF(0) has four main subunits: a(1), b(1), b'(1) and c(9-12).

The protein resides in the plastid. The protein localises to the chloroplast thylakoid membrane. It carries out the reaction ATP + H2O + 4 H(+)(in) = ADP + phosphate + 5 H(+)(out). In terms of biological role, produces ATP from ADP in the presence of a proton gradient across the membrane. The catalytic sites are hosted primarily by the beta subunits. This chain is ATP synthase subunit beta, chloroplastic, found in Calycanthus floridus var. glaucus (Eastern sweetshrub).